A 468-amino-acid chain; its full sequence is 6-phosphogluconate dehydrogenase, decarboxylating (468 aa).

Residues 10–15 (GMAVMG), 33–35 (NRS), 74–76 (VKA), and Asn-102 contribute to the NADP(+) site. Residues Asn-102 and 128 to 130 (SGG) contribute to the substrate site. Lys-183 serves as the catalytic Proton acceptor. Substrate is bound at residue 186–187 (HN). Glu-190 functions as the Proton donor in the catalytic mechanism. 5 residues coordinate substrate: Tyr-191, Lys-260, Arg-287, Arg-445, and His-451.

The protein belongs to the 6-phosphogluconate dehydrogenase family. As to quaternary structure, homodimer.

It catalyses the reaction 6-phospho-D-gluconate + NADP(+) = D-ribulose 5-phosphate + CO2 + NADPH. Its pathway is carbohydrate degradation; pentose phosphate pathway; D-ribulose 5-phosphate from D-glucose 6-phosphate (oxidative stage): step 3/3. Its function is as follows. Catalyzes the oxidative decarboxylation of 6-phosphogluconate to ribulose 5-phosphate and CO(2), with concomitant reduction of NADP to NADPH. This is 6-phosphogluconate dehydrogenase, decarboxylating (gnd) from Escherichia coli (strain K12).